Reading from the N-terminus, the 282-residue chain is Armadillo repeat-containing protein 1 (282 aa).

Met1 carries the N-acetylmethionine modification. Residues Gly39–Gly81 form an ARM repeat. A Phosphothreonine modification is found at Thr137. Residues Ser189, Ser246, Ser260, and Ser267 each carry the phosphoserine modification. The interval Asp239–His261 is disordered. Residues Ser246–Val255 show a composition bias toward basic and acidic residues.

Interacts with mitochondrial contact site and cristae organizing system (MICOS) complex components IMMT/MIC60 and MICOS10/MIC10. Interacts with mitochondrial outer membrane sorting assembly machinery (SAM) complex components SAMM50 and MTX1.

It localises to the cytoplasm. The protein resides in the mitochondrion. The protein localises to the mitochondrion outer membrane. In association with mitochondrial contact site and cristae organizing system (MICOS) complex components and mitochondrial outer membrane sorting assembly machinery (SAM) complex components may regulate mitochondrial dynamics playing a role in determining mitochondrial length, distribution and motility. The protein is Armadillo repeat-containing protein 1 (ARMC1) of Pongo abelii (Sumatran orangutan).